The chain runs to 250 residues: Proteasome subunit alpha type-7-B (250 aa).

Residue Lys62 forms a Glycyl lysine isopeptide (Lys-Gly) (interchain with G-Cter in ubiquitin) linkage.

This sequence belongs to the peptidase T1A family. In terms of assembly, component of the 20S core complex of the 26S proteasome. The 26S proteasome is composed of a core protease (CP), known as the 20S proteasome, capped at one or both ends by the 19S regulatory particle (RP/PA700). The 20S proteasome core is composed of 28 subunits that are arranged in four stacked rings, resulting in a barrel-shaped structure. The two end rings are each formed by seven alpha subunits, and the two central rings are each formed by seven beta subunits. The catalytic chamber with the active sites is on the inside of the barrel.

The protein localises to the cytoplasm. It localises to the nucleus. In terms of biological role, the proteasome is a multicatalytic proteinase complex which is characterized by its ability to cleave peptides with Arg, Phe, Tyr, Leu, and Glu adjacent to the leaving group at neutral or slightly basic pH. The proteasome has an ATP-dependent proteolytic activity. In Arabidopsis thaliana (Mouse-ear cress), this protein is Proteasome subunit alpha type-7-B (PAD2).